The following is a 442-amino-acid chain: C4-dicarboxylate transport protein (442 aa).

9 consecutive transmembrane segments (helical) span residues 13–33, 49–69, 81–101, 149–169, 193–213, 227–247, 312–332, 336–356, and 357–377; these read VLYF…HFYP, GIKM…IAGM, LALL…LVVV, AFAK…GFAL, MIAI…AFTI, LMGS…GIIA, IYLT…MTLL, TLLA…GSGF, and IVLA…LAII.

This sequence belongs to the dicarboxylate/amino acid:cation symporter (DAACS) (TC 2.A.23) family.

The protein localises to the cell membrane. Functionally, responsible for the transport of dicarboxylates such as succinate, fumarate, and malate across the membrane. In Polynucleobacter asymbioticus (strain DSM 18221 / CIP 109841 / QLW-P1DMWA-1) (Polynucleobacter necessarius subsp. asymbioticus), this protein is C4-dicarboxylate transport protein.